A 284-amino-acid chain; its full sequence is Putative ribosome biogenesis protein C306.07c (284 aa).

The tract at residues 264-284 (LKKSELRAQKRGSSGEGKGNK) is disordered.

Belongs to the universal ribosomal protein uL1 family. Highly divergent. Component of the 90S pre-ribosomes.

It localises to the nucleus. The protein resides in the nucleolus. Functionally, involved in rRNA-processing and ribosome biosynthesis. This Schizosaccharomyces pombe (strain 972 / ATCC 24843) (Fission yeast) protein is Putative ribosome biogenesis protein C306.07c.